The chain runs to 289 residues: Protease HtpX homolog (289 aa).

The next 2 membrane-spanning stretches (helical) occupy residues 10-30 (TAAL…VIGS) and 34-54 (STTP…YGYW). Residue histidine 138 coordinates Zn(2+). Glutamate 139 is a catalytic residue. Histidine 142 lines the Zn(2+) pocket. The next 2 helical transmembrane spans lie at 153 to 173 (VAAA…IFGG) and 182 to 202 (LAVM…QSAI). Glutamate 207 contributes to the Zn(2+) binding site.

Belongs to the peptidase M48B family. The cofactor is Zn(2+).

The protein localises to the cell membrane. This Arthrobacter sp. (strain FB24) protein is Protease HtpX homolog.